Consider the following 406-residue polypeptide: Acetate kinase (406 aa).

Mg(2+) is bound at residue Asn-8. Lys-15 is a binding site for ATP. Residue Arg-92 participates in substrate binding. Asp-149 serves as the catalytic Proton donor/acceptor. Residues 209-213 (HLGNG), 283-285 (DFR), and 331-335 (GVGEN) each bind ATP. Position 385 (Glu-385) interacts with Mg(2+).

This sequence belongs to the acetokinase family. In terms of assembly, homodimer. Mg(2+) is required as a cofactor. Mn(2+) serves as cofactor.

It localises to the cytoplasm. It catalyses the reaction acetate + ATP = acetyl phosphate + ADP. It participates in metabolic intermediate biosynthesis; acetyl-CoA biosynthesis; acetyl-CoA from acetate: step 1/2. Functionally, catalyzes the formation of acetyl phosphate from acetate and ATP. Can also catalyze the reverse reaction. The protein is Acetate kinase of Corynebacterium aurimucosum (strain ATCC 700975 / DSM 44827 / CIP 107346 / CN-1) (Corynebacterium nigricans).